Here is a 191-residue protein sequence, read N- to C-terminus: Thymidine kinase (191 aa).

ATP is bound by residues 9–16 (GSMNSGKT) and 85–88 (DESQ). Glu-86 (proton acceptor) is an active-site residue. Residues Cys-143, Cys-146, Cys-181, and Cys-184 each coordinate Zn(2+).

Belongs to the thymidine kinase family. In terms of assembly, homotetramer.

Its subcellular location is the cytoplasm. The enzyme catalyses thymidine + ATP = dTMP + ADP + H(+). The protein is Thymidine kinase of Listeria monocytogenes serovar 1/2a (strain ATCC BAA-679 / EGD-e).